The chain runs to 92 residues: MIKNSFISFQEKKKENSGSVEFQVFSFTNKIRRLTSHLELHRKDYLSQRGLRKILGKRQRLLSYLSKKNRVRYKELINQLDIRESKKISFLN.

Belongs to the universal ribosomal protein uS15 family. As to quaternary structure, part of the 30S ribosomal subunit.

Its subcellular location is the plastid. It is found in the chloroplast. The polypeptide is Small ribosomal subunit protein uS15c (rps15) (Carica papaya (Papaya)).